The sequence spans 155 residues: Small ribosomal subunit protein uS7c (155 aa).

The protein belongs to the universal ribosomal protein uS7 family. In terms of assembly, part of the 30S ribosomal subunit.

The protein localises to the plastid. Its subcellular location is the chloroplast. One of the primary rRNA binding proteins, it binds directly to 16S rRNA where it nucleates assembly of the head domain of the 30S subunit. The protein is Small ribosomal subunit protein uS7c (rps7) of Canella winterana (Wild cinnamon).